The primary structure comprises 57 residues: MPKTVFRKGETIEETLRRFKREVSKSGVLAEARRKEHYIKPSVQKKNRQKNMRSKKR.

The disordered stretch occupies residues 34–57; that stretch reads RKEHYIKPSVQKKNRQKNMRSKKR. Residues 43 to 57 are compositionally biased toward basic residues; sequence VQKKNRQKNMRSKKR.

The protein belongs to the bacterial ribosomal protein bS21 family.

This is Small ribosomal subunit protein bS21 from Aster yellows witches'-broom phytoplasma (strain AYWB).